We begin with the raw amino-acid sequence, 338 residues long: UDP-N-acetylenolpyruvoylglucosamine reductase (338 aa).

One can recognise an FAD-binding PCMH-type domain in the interval 17–188; that stretch reads IAARTDWWID…MYVDYRLRLK (172 aa). Arg164 is an active-site residue. Ser237 acts as the Proton donor in catalysis. Glu333 is a catalytic residue.

Belongs to the MurB family. Requires FAD as cofactor.

The protein resides in the cytoplasm. The enzyme catalyses UDP-N-acetyl-alpha-D-muramate + NADP(+) = UDP-N-acetyl-3-O-(1-carboxyvinyl)-alpha-D-glucosamine + NADPH + H(+). The protein operates within cell wall biogenesis; peptidoglycan biosynthesis. In terms of biological role, cell wall formation. This Porphyromonas gingivalis (strain ATCC BAA-308 / W83) protein is UDP-N-acetylenolpyruvoylglucosamine reductase.